The following is a 475-amino-acid chain: MSETFSPNLTFTEGFVLGQASFLIILLLFIRYVVFSPSEQIDHEGWRKRRAERADLLSNHTPPPLSNLLSKTSYDMSIHPAESSDWVNVLLAQILQGYRNDLLSEGGEEGARQRIEGWLNPKGENLSWLDPIDVTSLSLGTSYPLLSNARIRPADGQGRLRAEIDVDYLDSLSMTLSTAVLVNFPKPRFAVLPVTLGVELVSIGGTMSVQLHEPIEDRQHIHVNLLPDFHLNLKVTSLLGSRAKLQDIPKLEQLIVSRLRNLVQDRFVHPNHISLALPRILSPSVSSTPILEGLGEGAVDAMKDAVSDGMKRMVEDFMGENPVEGALNGQGEEQWLDDDFPPTPLVQPPGTFPTLSVSSRQSHRQSLPPSRPQSTTQGQPQLFYRRPLIHPTQSYPHYNTYTLDPQIPHSVSYRHPPRGSHVHNPPETPVPQRPSHGQGRMSTTSSLTPSQSQSQFRFRGQFASGVTPGQVGTSR.

The Lumenal segment spans residues 1–14; that stretch reads MSETFSPNLTFTEG. A helical transmembrane segment spans residues 15–35; it reads FVLGQASFLIILLLFIRYVVF. Residues 36–475 lie on the Cytoplasmic side of the membrane; sequence SPSEQIDHEG…VTPGQVGTSR (440 aa). Residues 80–278 enclose the SMP-LTD domain; that stretch reads PAESSDWVNV…HPNHISLALP (199 aa). Disordered stretches follow at residues 321-381 and 394-475; these read NPVE…GQPQ and SYPH…GTSR. The span at 341–351 shows a compositional bias: pro residues; that stretch reads PPTPLVQPPGT. 2 stretches are compositionally biased toward polar residues: residues 353-380 and 394-403; these read PTLS…QGQP and SYPHYNTYTL. The segment covering 442–464 has biased composition (low complexity); sequence STTSSLTPSQSQSQFRFRGQFAS.

This sequence belongs to the MMM1 family. As to quaternary structure, homodimer. Component of the ER-mitochondria encounter structure (ERMES) or MDM complex, composed of MMM1, MDM10, MDM12 and MDM34. An MMM1 homodimer associates with one molecule of MDM12 on each side in a pairwise head-to-tail manner, and the SMP-LTD domains of MMM1 and MDM12 generate a continuous hydrophobic tunnel for phospholipid trafficking.

It is found in the endoplasmic reticulum membrane. Its function is as follows. Component of the ERMES/MDM complex, which serves as a molecular tether to connect the endoplasmic reticulum (ER) and mitochondria. Components of this complex are involved in the control of mitochondrial shape and protein biogenesis, and function in nonvesicular lipid trafficking between the ER and mitochondria. The MDM12-MMM1 subcomplex functions in the major beta-barrel assembly pathway that is responsible for biogenesis of all outer membrane beta-barrel proteins, and acts in a late step after the SAM complex. The MDM10-MDM12-MMM1 subcomplex further acts in the TOM40-specific pathway after the action of the MDM12-MMM1 complex. Essential for establishing and maintaining the structure of mitochondria and maintenance of mtDNA nucleoids. This chain is Maintenance of mitochondrial morphology protein 1, found in Cryptococcus neoformans var. neoformans serotype D (strain B-3501A) (Filobasidiella neoformans).